The primary structure comprises 547 residues: Peptide chain release factor 3 (547 aa).

Residues 24 to 294 (DRRRNFAIIS…AFLQYAAKPE (271 aa)) enclose the tr-type G domain. GTP is bound by residues 33 to 40 (SHPDAGKT), 101 to 105 (DTPGH), and 155 to 158 (NKLD).

Belongs to the TRAFAC class translation factor GTPase superfamily. Classic translation factor GTPase family. PrfC subfamily.

The protein resides in the cytoplasm. In terms of biological role, increases the formation of ribosomal termination complexes and stimulates activities of RF-1 and RF-2. It binds guanine nucleotides and has strong preference for UGA stop codons. It may interact directly with the ribosome. The stimulation of RF-1 and RF-2 is significantly reduced by GTP and GDP, but not by GMP. This chain is Peptide chain release factor 3 (prfC), found in Synechocystis sp. (strain ATCC 27184 / PCC 6803 / Kazusa).